We begin with the raw amino-acid sequence, 286 residues long: Beta-lactamase SHV-2 (286 aa).

The signal sequence occupies residues 1-21 (MRYIRLCIISLLATLPLAVHA). S66 functions as the Acyl-ester intermediate in the catalytic mechanism. C73 and C119 are joined by a disulfide. E164 serves as the catalytic Proton acceptor. 230 to 232 (KTG) contacts substrate.

It belongs to the class-A beta-lactamase family.

It catalyses the reaction a beta-lactam + H2O = a substituted beta-amino acid. Functionally, this enzyme hydrolyzes cefotaxime, ceftazidime and other broad spectrum cephalosporins. In Klebsiella pneumoniae, this protein is Beta-lactamase SHV-2 (bla).